Consider the following 726-residue polypeptide: Dipeptidyl-peptidase 5 (726 aa).

Positions 1 to 19 are cleaved as a signal peptide; it reads MAAAKWLIASLAFASSGLA. N-linked (GlcNAc...) asparagine glycans are attached at residues asparagine 96 and asparagine 252. The segment at 269-291 is disordered; that stretch reads AEPINKRNGPRTPQAIEGASSSP. Serine 558 acts as the Charge relay system in catalysis. Residue asparagine 605 is glycosylated (N-linked (GlcNAc...) asparagine). Residues aspartate 641 and histidine 673 each act as charge relay system in the active site. Asparagine 699 carries N-linked (GlcNAc...) asparagine glycosylation.

Belongs to the peptidase S9C family.

Its subcellular location is the secreted. Extracellular dipeptidyl-peptidase which removes N-terminal dipeptides sequentially from polypeptides having unsubstituted N-termini. Contributes to pathogenicity. This Trichophyton equinum (Horse ringworm fungus) protein is Dipeptidyl-peptidase 5 (DPP5).